We begin with the raw amino-acid sequence, 902 residues long: Protein SYG1 (902 aa).

The region spanning 1-303 (MKFADHLTES…HTRELTTFMS (303 aa)) is the SPX domain. Over 1–404 (MKFADHLTES…RNNRSIVQML (404 aa)) the chain is Cytoplasmic. A phosphoserine mark is found at Ser-172 and Ser-179. Residues 405–425 (VVGLGIGVSMTLITYTLYLGI) traverse the membrane as a helical segment. Residues 426-435 (SSEETSFTHK) are Extracellular-facing. The helical transmembrane segment at 436–456 (ILFPLWGGWYMVLLIAFLFLV) threads the bilayer. The Cytoplasmic portion of the chain corresponds to 457–497 (NCFIWHRTGINYRFIMLGEIQSKNGTQFFNNDFATSKIPLK). A helical membrane pass occupies residues 498 to 518 (LYFLTFFIVPCAVCSMLSFAL). The Extracellular portion of the chain corresponds to 519–522 (EKLT). The chain crosses the membrane as a helical span at residues 523 to 543 (PLGFLYIGIVSFLFLCPSGLI). The Cytoplasmic portion of the chain corresponds to 544 to 554 (PYWDKVVHTRK). Residues 555–575 (WLVVTLIRLMMSGFFPVEFGD) form a helical membrane-spanning segment. Residue Phe-576 is a topological domain, extracellular. A helical membrane pass occupies residues 577-599 (FLGDIICSLTYSIADIAMFFCVY). The Cytoplasmic segment spans residues 600–732 (SHTPNNLCGS…NGSYSFSRKL (133 aa)). One can recognise an EXS domain in the interval 606–815 (LCGSSHSRAM…PIAQVGDDSM (210 aa)). Residues 733–753 (VYYFAMIWDILIRFEWIVYAI) form a helical membrane-spanning segment. Over 754 to 761 (APQTIQQS) the chain is Extracellular. The helical transmembrane segment at 762-782 (AVTSFILALLEVLRRFVWIIF) threads the bilayer. The Cytoplasmic segment spans residues 783–902 (RVENEHVANV…DSESEVESIM (120 aa)). 2 positions are modified to phosphoserine: Ser-859 and Ser-860. Residues 882 to 902 (VNTVDDRSPETDSESEVESIM) are disordered. Residues 892 to 902 (TDSESEVESIM) are compositionally biased toward acidic residues.

The protein belongs to the SYG1 (TC 2.A.94) family.

The protein resides in the cell membrane. Functionally, may function in G-protein coupled signal transduction. This Saccharomyces cerevisiae (strain ATCC 204508 / S288c) (Baker's yeast) protein is Protein SYG1 (SYG1).